The following is a 206-amino-acid chain: Phosphoribosyl-dephospho-CoA transferase (206 aa).

Catalysis depends on residues Asp-131 and Asp-133.

Belongs to the MdcG family.

The catalysed reaction is apo-[malonate decarboxylase ACP] + 2'-(5''-triphospho-alpha-D-ribosyl)-3'-dephospho-CoA = holo-[malonate decarboxylase ACP] + diphosphate. Functionally, transfers 2'-(5-triphosphoribosyl)-3'-dephosphocoenzyme-A to the apo-[acyl-carrier-protein] of the malonate decarboxylase to yield holo-[acyl-carrier-protein]. The polypeptide is Phosphoribosyl-dephospho-CoA transferase (Pseudomonas fluorescens (strain Pf0-1)).